Reading from the N-terminus, the 46-residue chain is Thymosin beta-a (46 aa).

Positions 21 to 30 (TNTAEKNTLP) are enriched in polar residues. Positions 21–46 (TNTAEKNTLPTKEDIDQEKKAAEGGK) are disordered. The span at 31 to 46 (TKEDIDQEKKAAEGGK) shows a compositional bias: basic and acidic residues.

It belongs to the thymosin beta family.

It localises to the cytoplasm. It is found in the cytoskeleton. Its function is as follows. Plays an important role in the organization of the cytoskeleton. Binds to and sequesters actin monomers (G actin) and therefore inhibits actin polymerization. This Cyprinus carpio (Common carp) protein is Thymosin beta-a.